A 50-amino-acid chain; its full sequence is Small ribosomal subunit protein uS14 (50 aa).

Zn(2+) contacts are provided by Cys15, Cys18, Cys33, and Cys36.

It belongs to the universal ribosomal protein uS14 family. Zinc-binding uS14 subfamily. In terms of assembly, part of the 30S ribosomal subunit. Zn(2+) serves as cofactor.

Its function is as follows. Binds 16S rRNA, required for the assembly of 30S particles. This is Small ribosomal subunit protein uS14 from Methanothermobacter thermautotrophicus (strain ATCC 29096 / DSM 1053 / JCM 10044 / NBRC 100330 / Delta H) (Methanobacterium thermoautotrophicum).